Consider the following 345-residue polypeptide: MVHNKNNTILKMIKGEETTHTPVWFMRQAGRSQPEYRKLKEKYSLFDITHQPELCAYVTHLPVDNYHTDAAILYKDIMTPLKPIGVDVEIKSGIGPVIHNPIKTIQDVEKLSQIDPERDVPYVLDTIKLLTEEKLNVPLIGFTGAPFTLASYMIEGGPSKNYNFTKAMMFRDEATWFALMNHLVDVSVKYVTAQVEAGAELIQIFDSWVGALNVEDYRRYIKPHMIRLISEVKEKHDVPVILFGVGASHLINEWNDLPIDVLGLDWRTSINQAQQLGVTKTLQGNLDPSILLAPWNVIEERLKPILDQGMENGKHIFNLGHGVFPEVHPETLRKVSEFVHTYTQR.

Substrate-binding positions include 27-31, Phe46, Asp76, Tyr152, Ser207, and His321; that span reads RQAGR.

This sequence belongs to the uroporphyrinogen decarboxylase family. Homodimer.

Its subcellular location is the cytoplasm. It carries out the reaction uroporphyrinogen III + 4 H(+) = coproporphyrinogen III + 4 CO2. It functions in the pathway porphyrin-containing compound metabolism; protoporphyrin-IX biosynthesis; coproporphyrinogen-III from 5-aminolevulinate: step 4/4. Its function is as follows. Catalyzes the decarboxylation of four acetate groups of uroporphyrinogen-III to yield coproporphyrinogen-III. The chain is Uroporphyrinogen decarboxylase from Staphylococcus aureus (strain bovine RF122 / ET3-1).